The sequence spans 371 residues: Peptide chain release factor 2 (371 aa).

The residue at position 253 (Gln-253) is an N5-methylglutamine.

The protein belongs to the prokaryotic/mitochondrial release factor family. In terms of processing, methylated by PrmC. Methylation increases the termination efficiency of RF2.

It localises to the cytoplasm. Its function is as follows. Peptide chain release factor 2 directs the termination of translation in response to the peptide chain termination codons UGA and UAA. The sequence is that of Peptide chain release factor 2 from Mycobacterium sp. (strain KMS).